We begin with the raw amino-acid sequence, 218 residues long: Probable nicotinate-nucleotide adenylyltransferase (218 aa).

It belongs to the NadD family.

It catalyses the reaction nicotinate beta-D-ribonucleotide + ATP + H(+) = deamido-NAD(+) + diphosphate. It functions in the pathway cofactor biosynthesis; NAD(+) biosynthesis; deamido-NAD(+) from nicotinate D-ribonucleotide: step 1/1. Catalyzes the reversible adenylation of nicotinate mononucleotide (NaMN) to nicotinic acid adenine dinucleotide (NaAD). The chain is Probable nicotinate-nucleotide adenylyltransferase from Burkholderia cenocepacia (strain ATCC BAA-245 / DSM 16553 / LMG 16656 / NCTC 13227 / J2315 / CF5610) (Burkholderia cepacia (strain J2315)).